The sequence spans 543 residues: MDTIIMIPVATAIVSLLVGTVIGYAIRKHSWEQKVQNAQNDADHILADARAQVAAVKAEVNAQKQAAEAVKQSAENTKKEKILEAQEQIRDYKQKTEDKLNLKKDDLARQENRLKQREDTLDHKNSLLDEREAGLTKKEDQLKQQYTSLKAKLTEADELVEARRQKLYDVAKLDKEEAKKIVLNKLSDELVKERAELIRNSNEEVKAKADHYASQIIVDAIQSSAADTVAETTVSVVDLPNEEMKGRIIGREGRNIRSFEALTGIDLIIDDTPKVVTLSGFDPIRREIAKRAMERLIKDGRIHPARIEEMVDKARKEVNDDIYEAGESALMELGIHRMNPELVKTLGRLKYRTSYGQNVLSHSIEVGKLAGTMAAELGLDEKLAVRAGLLHDIGKAIDHDIEGSHVEIGVELTRKYHESDVVVNAIAAHHGDVPKLSFIAELVVAADTISSARPGARSESLENYIRRLTELEKIAKSYQGVKQAYAIQAGREVRVMVEPDEISDDRTVILARDIRNQVEKELDYPGNIKITVIREKRVVAIAK.

The chain crosses the membrane as a helical span at residues 4 to 24 (IIMIPVATAIVSLLVGTVIGY). The KH domain occupies 233–296 (TVSVVDLPNE…EIAKRAMERL (64 aa)). The HD domain maps to 359 to 452 (VLSHSIEVGK…VVAADTISSA (94 aa)).

It belongs to the RNase Y family.

It is found in the cell membrane. In terms of biological role, endoribonuclease that initiates mRNA decay. The sequence is that of Ribonuclease Y from Lactobacillus helveticus (strain DPC 4571).